The following is a 289-amino-acid chain: Pantothenate synthetase (289 aa).

Residue 30 to 37 (MGYLHKGH) coordinates ATP. Histidine 37 acts as the Proton donor in catalysis. Residue glutamine 61 participates in (R)-pantoate binding. Residue glutamine 61 coordinates beta-alanine. An ATP-binding site is contributed by 147–150 (GEKD). Glutamine 153 contributes to the (R)-pantoate binding site. ATP is bound by residues valine 176 and 184–187 (CSSR).

Belongs to the pantothenate synthetase family. Homodimer.

It localises to the cytoplasm. The enzyme catalyses (R)-pantoate + beta-alanine + ATP = (R)-pantothenate + AMP + diphosphate + H(+). Its pathway is cofactor biosynthesis; (R)-pantothenate biosynthesis; (R)-pantothenate from (R)-pantoate and beta-alanine: step 1/1. Its function is as follows. Catalyzes the condensation of pantoate with beta-alanine in an ATP-dependent reaction via a pantoyl-adenylate intermediate. The chain is Pantothenate synthetase from Brucella anthropi (strain ATCC 49188 / DSM 6882 / CCUG 24695 / JCM 21032 / LMG 3331 / NBRC 15819 / NCTC 12168 / Alc 37) (Ochrobactrum anthropi).